The sequence spans 867 residues: MIHLHSPPTAPAAFGGAGSADWRRRRRWSWSSSSRAPVAKGGHLRPCVWRRGGDDGGGEDHHADGGGGGGGGAAWRARATTAGVSSSSSTAKGLQANIIEHETPRITKWPNESRDLDDHQQNNEADEEADDELQPLVEQVRSMLSSMEDGAITASAYDTAWVALVPRLDGEGGTQFPAAVRWIVGSQLADGSWGDEALFSAYDRVINTLACVVALTRWSLHHDQCKQGLQFLNLNLWRLAEEEPDTMPIGFEIAFPSLVEAARGLGIDFPYDHPALKGIYANRELKLKRIPKDMMHIVPTSILHSLEGMPGLDWQRLLKLQCSDGSFLFSPSATAYALMQTGDKKCFAYIDRIIKKFDGGVPNVYPVDLFEHIWVVDRLERLGISRYFQREIEQNMDYVNRHWTEDGICWARNSNVKEVDDTAMAFRLLRLHGYNVSPSVFKNFEKDGEFFCFVGQSTQAVTGMYNLNRASQISFPGEDILQRARNFSYEFLREREAQGTLHDKWIISKDLPGEVQYTLDFPWYASLPRVEARTYIGQYGGNDDVWIGKTLYRMPIVNNATYLELAKQDFNRCQALHQHELQGLQKWFIENGLEAFGMTPEDVLRAYFLAAACIFEPNRASERLAWARVSVLANTISRHFYSDMSSMKRMERFMWSSLYEENGNVLGLEGYAKDGILARTLCQLIDLLSQETPPVREGQKCIHNLIRCAWIEWMMQQINMKDGRYDKGRVMHPGSCTVHNKETCLLIAQIVEICAGRIEEAASMINNTEGSWFIQLASSICDSLHAKMLLSQDTKKNETTINQIDKEIELGMQELAQYLLPRVDDRRINNKTKQTFLSIVKSCYYAANCSPHMLDQHISEVIFEQVI.

The transit peptide at 1–35 (MIHLHSPPTAPAAFGGAGSADWRRRRRWSWSSSSR) directs the protein to the chloroplast. The interval 1 to 134 (MIHLHSPPTA…ADEEADDELQ (134 aa)) is disordered. The segment covering 51 to 64 (RGGDDGGGEDHHAD) has biased composition (basic and acidic residues). Low complexity predominate over residues 74–89 (AWRARATTAGVSSSSS). Over residues 99 to 121 (IEHETPRITKWPNESRDLDDHQQ) the composition is skewed to basic and acidic residues. The span at 124 to 133 (EADEEADDEL) shows a compositional bias: acidic residues. K286 serves as a coordination point for substrate. The DXDD motif motif lies at 418–421 (EVDD). K504 serves as a coordination point for substrate.

The protein belongs to the terpene synthase family. Requires Mg(2+) as cofactor.

It localises to the plastid. The protein resides in the chloroplast. It catalyses the reaction (2E,6E,10E)-geranylgeranyl diphosphate = ent-copalyl diphosphate. Its pathway is plant hormone biosynthesis; gibberellin biosynthesis. Catalyzes the conversion of geranylgeranyl diphosphate to the gibberellin precursor ent-copalyl diphosphate. The chain is Ent-copalyl diphosphate synthase 1, chloroplastic (CPS1) from Oryza sativa subsp. japonica (Rice).